Reading from the N-terminus, the 535-residue chain is Dimethylaniline monooxygenase [N-oxide-forming] 2 (535 aa).

Residues 9–13, E32, 40–41, and 61–62 each bind FAD; these read GAGVS, LW, and NT. NADP(+) is bound by residues 60 to 61 and 195 to 198; these read TN and SAAD. A Glycyl lysine isopeptide (Lys-Gly) (interchain with G-Cter in SUMO) cross-link involves residue K492. The chain crosses the membrane as a helical span at residues 510-530; that stretch reads APVSFLIKVLGLLAIVLAFFF.

Belongs to the FMO family. It depends on FAD as a cofactor. Requires Mg(2+) as cofactor.

The protein resides in the microsome membrane. The protein localises to the endoplasmic reticulum membrane. Functionally, catalyzes the oxidative metabolism of numerous xenobiotics, including mainly therapeutic drugs and insecticides that contain a soft nucleophile, most commonly nitrogen and sulfur and participates to their bioactivation. This chain is Dimethylaniline monooxygenase [N-oxide-forming] 2, found in Rattus norvegicus (Rat).